Reading from the N-terminus, the 60-residue chain is Large ribosomal subunit protein uL30 (60 aa).

It belongs to the universal ribosomal protein uL30 family. As to quaternary structure, part of the 50S ribosomal subunit.

This Flavobacterium johnsoniae (strain ATCC 17061 / DSM 2064 / JCM 8514 / BCRC 14874 / CCUG 350202 / NBRC 14942 / NCIMB 11054 / UW101) (Cytophaga johnsonae) protein is Large ribosomal subunit protein uL30.